The primary structure comprises 799 residues: MQAKTTSEEYVIPNFAQTINNRTIVNIFESCKYRSPLIICALNDAVLAKEYSNSMAMGSGTITFMIDNDVDIMSSLYTTFRTVSTLLLMGNQLCVFIVVPMSVISTDALTAIAYAYRGAMIELRHYGRGDDYVQERLESLFKLSPLCGTPHMGPKYYGPTVFSELLDLSHHNKTSWYSVIDYSMFTRTALVGFASYMMKTLSLNSSIVNIVGYNPPYVWAAMMHGVTIRYIEKEIPNPKGKGPMGLIMPELNGRVLTNKVKYVLHNPQIKLLCLDSMMFMSSRNIVYIGAYPATHLLDMNLRGWNIYAVDPEITQQWISDMKAKTGANICASSRKFMFDVSENIKINEFFGNQPYSIIDDSWVPDNYEQFQDKKRNYFQELVKSDQKVTLITMKWNTRKNVTCEKLLALLPQPYGGKLYEMRAFFHRNGIGSITIDANSVEKYIQKFQELPLGAQVGTQKFMHTMISRVQDVMSIQPKKGDVIIASYSLSNASNPKKKVLEYLTKASKSEAMIIFGAPNLERVKYMRERGVLPGNNITINGEKITFNNPSGKKWTDFGYTNSELLACDMIEVTIEQMVSFMSTSFRGTGYYSNSIYNDLFSWFIPIWVWNQTMQIQDIRLSPVALVKCFTTKIRNLCYVPHSTYYALRGHLVAKMFSENNIENNCYSISGKSNETFTVLKDFKFPTSIGVLEFKAGEKVNISGHLLSLAVAAHFVAVPVTMWARHIKYMTVDRQKPPDVDRILFFDNKIKRNTLEKWHTKSEVILAALIAGEYVGLMLNNFHSKAIVDDLCNTVLATFR.

It belongs to the phytoreovirus protein P5 family.

The protein resides in the virion. Its subcellular location is the host cytoplasm. It carries out the reaction a 5'-end diphospho-ribonucleoside in mRNA + GTP + H(+) = a 5'-end (5'-triphosphoguanosine)-ribonucleoside in mRNA + diphosphate. The protein operates within mRNA processing; mRNA capping. Enzyme involved in mRNA capping (Potential). Binds to GTP and might have guanylyltransferase activity. Together with the RNA-directed RNA polymerase P1 and protein P7, forms an transcriptional complex positioned near the channels situated at each of the five-fold vertices of the core. This Nephotettix cincticeps (Green rice leafhopper) protein is Putative mRNA-capping enzyme P5.